The following is a 629-amino-acid chain: 1-deoxy-D-xylulose-5-phosphate synthase (629 aa).

Residues H72 and 113 to 115 (GHA) each bind thiamine diphosphate. D144 provides a ligand contact to Mg(2+). Thiamine diphosphate contacts are provided by residues 145–146 (GA), N174, Y287, and E370. N174 serves as a coordination point for Mg(2+).

This sequence belongs to the transketolase family. DXPS subfamily. Homodimer. Mg(2+) is required as a cofactor. Requires thiamine diphosphate as cofactor.

It carries out the reaction D-glyceraldehyde 3-phosphate + pyruvate + H(+) = 1-deoxy-D-xylulose 5-phosphate + CO2. Its pathway is metabolic intermediate biosynthesis; 1-deoxy-D-xylulose 5-phosphate biosynthesis; 1-deoxy-D-xylulose 5-phosphate from D-glyceraldehyde 3-phosphate and pyruvate: step 1/1. Catalyzes the acyloin condensation reaction between C atoms 2 and 3 of pyruvate and glyceraldehyde 3-phosphate to yield 1-deoxy-D-xylulose-5-phosphate (DXP). The sequence is that of 1-deoxy-D-xylulose-5-phosphate synthase from Prochlorococcus marinus (strain AS9601).